The primary structure comprises 296 residues: 4-hydroxybenzoate octaprenyltransferase (296 aa).

A run of 8 helical transmembrane segments spans residues 29-49, 55-75, 102-122, 146-166, 169-189, 219-239, 241-261, and 275-295; these read IGIY…ADGV, LLIF…INDF, AWIT…LTNA, YYPQ…AFTA, GELP…TVAY, LIIG…GSRF, LGLY…WEAW, and FLHN…DYAL.

The protein belongs to the UbiA prenyltransferase family. It depends on Mg(2+) as a cofactor.

It localises to the cell inner membrane. It carries out the reaction all-trans-octaprenyl diphosphate + 4-hydroxybenzoate = 4-hydroxy-3-(all-trans-octaprenyl)benzoate + diphosphate. It functions in the pathway cofactor biosynthesis; ubiquinone biosynthesis. Catalyzes the prenylation of para-hydroxybenzoate (PHB) with an all-trans polyprenyl group. Mediates the second step in the final reaction sequence of ubiquinone-8 (UQ-8) biosynthesis, which is the condensation of the polyisoprenoid side chain with PHB, generating the first membrane-bound Q intermediate 3-octaprenyl-4-hydroxybenzoate. The polypeptide is 4-hydroxybenzoate octaprenyltransferase (Pseudomonas aeruginosa (strain UCBPP-PA14)).